We begin with the raw amino-acid sequence, 147 residues long: Large ribosomal subunit protein uL15 (147 aa).

Positions 1–54 are disordered; that stretch reads MKLFELQPAPGSKKLPNRKGRGIGSGNGKTGGRGHKGQNARAGGGVRPGFEGGQ. 2 stretches are compositionally biased toward gly residues: residues 22-31 and 42-52; these read GIGSGNGKTG and AGGGVRPGFEG.

Belongs to the universal ribosomal protein uL15 family. As to quaternary structure, part of the 50S ribosomal subunit.

Its function is as follows. Binds to the 23S rRNA. This chain is Large ribosomal subunit protein uL15, found in Ruminiclostridium cellulolyticum (strain ATCC 35319 / DSM 5812 / JCM 6584 / H10) (Clostridium cellulolyticum).